A 462-amino-acid chain; its full sequence is ATP synthase subunit beta (462 aa).

Position 149–156 (149–156) interacts with ATP; it reads GGAGVGKT.

Belongs to the ATPase alpha/beta chains family. F-type ATPases have 2 components, CF(1) - the catalytic core - and CF(0) - the membrane proton channel. CF(1) has five subunits: alpha(3), beta(3), gamma(1), delta(1), epsilon(1). CF(0) has three main subunits: a(1), b(2) and c(9-12). The alpha and beta chains form an alternating ring which encloses part of the gamma chain. CF(1) is attached to CF(0) by a central stalk formed by the gamma and epsilon chains, while a peripheral stalk is formed by the delta and b chains.

It is found in the cell inner membrane. The enzyme catalyses ATP + H2O + 4 H(+)(in) = ADP + phosphate + 5 H(+)(out). Functionally, produces ATP from ADP in the presence of a proton gradient across the membrane. The catalytic sites are hosted primarily by the beta subunits. This chain is ATP synthase subunit beta, found in Fusobacterium nucleatum subsp. nucleatum (strain ATCC 25586 / DSM 15643 / BCRC 10681 / CIP 101130 / JCM 8532 / KCTC 2640 / LMG 13131 / VPI 4355).